Here is a 98-residue protein sequence, read N- to C-terminus: Co-chaperonin GroES (98 aa).

Belongs to the GroES chaperonin family. In terms of assembly, heptamer of 7 subunits arranged in a ring. Interacts with the chaperonin GroEL.

It is found in the cytoplasm. In terms of biological role, together with the chaperonin GroEL, plays an essential role in assisting protein folding. The GroEL-GroES system forms a nano-cage that allows encapsulation of the non-native substrate proteins and provides a physical environment optimized to promote and accelerate protein folding. GroES binds to the apical surface of the GroEL ring, thereby capping the opening of the GroEL channel. The polypeptide is Co-chaperonin GroES (Bartonella bacilliformis (strain ATCC 35685 / KC583 / Herrer 020/F12,63)).